We begin with the raw amino-acid sequence, 750 residues long: Neprilysin (750 aa).

Residues 1–14 (MGRSESQMDITDIN) are compositionally biased toward polar residues. Residues 1–20 (MGRSESQMDITDINTPKPKK) are disordered. A lipid anchor (N-myristoyl glycine) is attached at Gly-2. The Cytoplasmic segment spans residues 2–28 (GRSESQMDITDINTPKPKKKQRWTPLE). Phosphoserine occurs at positions 4 and 6. Residues 16 to 23 (PKPKKKQR) carry the Stop-transfer sequence motif. The helical; Signal-anchor for type II membrane protein transmembrane segment at 29-51 (ISLSVLVLLLTVIAVTMIALYAT) threads the bilayer. At 52–750 (YDDGICKSSD…MNPEKKCRVW (699 aa)) the chain is on the extracellular side. One can recognise a Peptidase M13 domain in the interval 56 to 750 (ICKSSDCIKS…MNPEKKCRVW (695 aa)). Intrachain disulfides connect Cys-57–Cys-62, Cys-80–Cys-735, Cys-88–Cys-695, Cys-143–Cys-411, Cys-234–Cys-242, and Cys-621–Cys-747. Arg-103 serves as a coordination point for a peptide. Asn-145 is a glycosylation site (N-linked (GlcNAc...) asparagine). 3 N-linked (GlcNAc...) asparagine glycosylation sites follow: Asn-285, Asn-311, and Asn-325. His-584 lines the Zn(2+) pocket. Glu-585 is a catalytic residue. His-588 is a binding site for Zn(2+). N-linked (GlcNAc...) asparagine glycosylation occurs at Asn-628. Glu-647 serves as a coordination point for Zn(2+). The active-site Proton donor is Asp-651.

The protein belongs to the peptidase M13 family. It depends on Zn(2+) as a cofactor. Post-translationally, myristoylation is a determinant of membrane targeting. Glycosylation at Asn-628 is necessary both for surface expression and neutral endopeptidase activity.

The protein resides in the cell membrane. The enzyme catalyses Preferential cleavage of polypeptides between hydrophobic residues, particularly with Phe or Tyr at P1'.. The catalysed reaction is substance P + H2O = substance P(1-9) + L-Leu-L-Met-NH2. It catalyses the reaction substance P + H2O = substance P(1-7) + L-Phe-Gly-L-Leu-L-Met-NH2. It carries out the reaction neurotensin + H2O = neurotensin(1-11) + L-isoleucyl-L-leucine. The enzyme catalyses neurotensin + H2O = neurotensin(1-10) + L-tyrosyl-L-isoleucyl-L-leucine. Inhibited by mixanpril, an orally-active drug used for the treatment of hypertension. Its function is as follows. Thermolysin-like specificity, but is almost confined on acting on polypeptides of up to 30 amino acids. Biologically important in the destruction of opioid peptides such as Met- and Leu-enkephalins by cleavage of a Gly-Phe bond. Catalyzes cleavage of bradykinin, substance P and neurotensin peptides. Able to cleave angiotensin-1, angiotensin-2 and angiotensin 1-9. Involved in the degradation of atrial natriuretic factor (ANF) and brain natriuretic factor (BNP(1-32)). Displays UV-inducible elastase activity toward skin preelastic and elastic fibers. This is Neprilysin (MME) from Oryctolagus cuniculus (Rabbit).